We begin with the raw amino-acid sequence, 824 residues long: Leucine--tRNA ligase (824 aa).

The 'HIGH' region motif lies at 40-50; it reads PYPSGKIHMGH. Residues 580 to 584 carry the 'KMSKS' region motif; sequence KMSKS. Lys583 contacts ATP.

The protein belongs to the class-I aminoacyl-tRNA synthetase family.

The protein resides in the cytoplasm. The enzyme catalyses tRNA(Leu) + L-leucine + ATP = L-leucyl-tRNA(Leu) + AMP + diphosphate. The chain is Leucine--tRNA ligase from Alkaliphilus metalliredigens (strain QYMF).